Consider the following 150-residue polypeptide: MARCSCLIPAAWFRRIICSFTPPLRAPMIVDILVRFRIPVFSAWRGPCSPSTRDRGDDHLADRWKSVLLIIASIACGWIGWSGEVLLLPPAMFFPLLWAMAPSRTIATLVAVGYFLAACRGLPQGVANFYATDLWPRLVLWAVASVSVND.

This sequence to A.tumefaciens conjugal transfer protein TraB.

This is an uncharacterized protein from Agrobacterium tumefaciens (strain 15955).